A 246-amino-acid chain; its full sequence is Probable septum site-determining protein MinC (246 aa).

The protein belongs to the MinC family. Interacts with MinD and FtsZ.

Functionally, cell division inhibitor that blocks the formation of polar Z ring septums. Rapidly oscillates between the poles of the cell to destabilize FtsZ filaments that have formed before they mature into polar Z rings. Prevents FtsZ polymerization. The chain is Probable septum site-determining protein MinC from Pseudomonas syringae pv. tomato (strain ATCC BAA-871 / DC3000).